We begin with the raw amino-acid sequence, 189 residues long: Probable UbiX-like flavin prenyltransferase (189 aa).

Residues 9-11 (GAS), Ser-36, 87-90 (SMKT), and Arg-122 contribute to the FMN site.

The protein belongs to the UbiX/PAD1 family. YclB subfamily. In terms of assembly, homododecamer.

The enzyme catalyses dimethylallyl phosphate + FMNH2 = prenylated FMNH2 + phosphate. Its function is as follows. Involved in the non-oxidative decarboxylation and detoxification of phenolic derivatives under anaerobic conditions. Flavin prenyltransferase that catalyzes the synthesis of the prenylated FMN cofactor (prenyl-FMN) for phenolic acid decarboxylase. The chain is Probable UbiX-like flavin prenyltransferase from Sedimentibacter hydroxybenzoicus (Clostridium hydroxybenzoicum).